The chain runs to 357 residues: MAELKNDRFLRALLRQPVDRTPIWIMRQAGRYLPEYREVRAKAGDFLTLCTTPELACEVTLQPLRRFDLDAAIIFSDILTIPHAMGLGLYFSKGEGPRFERPVRTKNQVSALGVPDPESDLSYVMEALRLTRRELDGRVPLIGFSGSPWTLACYMVEGGSSKDFALIKGLMFEHPQVMHHLLEILAQAVTVYLNAQIAAGAQAVMLFDTWGGALSHRDYRDFSLSYMARIVEGVVRENEGRQVPVILFTKGGGLWLETMAGTGCDALGVDWTVDLAKARMQVGKQVALQGNMDPCVLYASSERVRQEASEIIKAYGAGSGHVFNLGHGIHPTVMPEKVAALVDAVHELSVPYHTYEE.

Residues 27–31 (RQAGR), Asp-77, Tyr-154, Thr-209, and His-327 each bind substrate.

It belongs to the uroporphyrinogen decarboxylase family. In terms of assembly, homodimer.

Its subcellular location is the cytoplasm. It catalyses the reaction uroporphyrinogen III + 4 H(+) = coproporphyrinogen III + 4 CO2. The protein operates within porphyrin-containing compound metabolism; protoporphyrin-IX biosynthesis; coproporphyrinogen-III from 5-aminolevulinate: step 4/4. In terms of biological role, catalyzes the decarboxylation of four acetate groups of uroporphyrinogen-III to yield coproporphyrinogen-III. The protein is Uroporphyrinogen decarboxylase of Nitrosococcus oceani (strain ATCC 19707 / BCRC 17464 / JCM 30415 / NCIMB 11848 / C-107).